The primary structure comprises 369 residues: tRNA 2-selenouridine synthase (369 aa).

A Rhodanese domain is found at 15-138 (FIAGQPLIDL…MRQYLIGVIE (124 aa)). C98 acts as the S-selanylcysteine intermediate in catalysis.

This sequence belongs to the SelU family. In terms of assembly, monomer.

It carries out the reaction 5-methylaminomethyl-2-thiouridine(34) in tRNA + selenophosphate + (2E)-geranyl diphosphate + H2O + H(+) = 5-methylaminomethyl-2-selenouridine(34) in tRNA + (2E)-thiogeraniol + phosphate + diphosphate. It catalyses the reaction 5-methylaminomethyl-2-thiouridine(34) in tRNA + (2E)-geranyl diphosphate = 5-methylaminomethyl-S-(2E)-geranyl-thiouridine(34) in tRNA + diphosphate. The catalysed reaction is 5-methylaminomethyl-S-(2E)-geranyl-thiouridine(34) in tRNA + selenophosphate + H(+) = 5-methylaminomethyl-2-(Se-phospho)selenouridine(34) in tRNA + (2E)-thiogeraniol. The enzyme catalyses 5-methylaminomethyl-2-(Se-phospho)selenouridine(34) in tRNA + H2O = 5-methylaminomethyl-2-selenouridine(34) in tRNA + phosphate. Functionally, involved in the post-transcriptional modification of the uridine at the wobble position (U34) of tRNA(Lys), tRNA(Glu) and tRNA(Gln). Catalyzes the conversion of 2-thiouridine (S2U-RNA) to 2-selenouridine (Se2U-RNA). Acts in a two-step process involving geranylation of 2-thiouridine (S2U) to S-geranyl-2-thiouridine (geS2U) and subsequent selenation of the latter derivative to 2-selenouridine (Se2U) in the tRNA chain. This is tRNA 2-selenouridine synthase from Shewanella sp. (strain MR-7).